A 307-amino-acid chain; its full sequence is Methionyl-tRNA formyltransferase (307 aa).

110–113 serves as a coordination point for (6S)-5,6,7,8-tetrahydrofolate; that stretch reads SLLP.

This sequence belongs to the Fmt family.

The catalysed reaction is L-methionyl-tRNA(fMet) + (6R)-10-formyltetrahydrofolate = N-formyl-L-methionyl-tRNA(fMet) + (6S)-5,6,7,8-tetrahydrofolate + H(+). Attaches a formyl group to the free amino group of methionyl-tRNA(fMet). The formyl group appears to play a dual role in the initiator identity of N-formylmethionyl-tRNA by promoting its recognition by IF2 and preventing the misappropriation of this tRNA by the elongation apparatus. This is Methionyl-tRNA formyltransferase from Rhodococcus erythropolis (strain PR4 / NBRC 100887).